Consider the following 148-residue polypeptide: Arginine repressor (148 aa).

The protein belongs to the ArgR family.

The protein localises to the cytoplasm. It functions in the pathway amino-acid biosynthesis; L-arginine biosynthesis [regulation]. Its function is as follows. Regulates arginine biosynthesis genes. This chain is Arginine repressor, found in Chlorobium chlorochromatii (strain CaD3).